A 772-amino-acid chain; its full sequence is MTMFNGDVEDGGRSNVSCGKDLKRYLMLMGVVALVVLFGAFIYRQSSGGLRLGAMMEQMTGARGAVNVPAQHGAPSAVVDPAMSVPARARVAPPSAAGAIATFPPVVDFGPAPVVSGGPFTGVVTLLRNSVVSVTASSSGGQVMPDPLGLVNPDGLPRFANPTTRSVENIGTGVIVRNDGFIVTNYHVVRGANSVYVTVKDDVGSIRYSGEIVKMDEALDLALLKITPKVQLTAAVLGDSDAVNVADEVIAIGTPFGLDMTVSRGIISAKRKTMVIEGMTHSNLLQTDAAINQGNSGGPLVAANGTVVGINTAIYTPNGAFAGIGFAVPSNQARLFALDEVGWLPTSTAEGPAMGLVAMQRPMGVGVGAAGPVIAAGTPSPHVDGRQNMDCSNCHDIIPAGNGFQAPMMPVAAPVPPPPIPANAVSPHTDGRQNMTCNTCHQFVGGAAAGPIAFGQPMMPIAAPQQPAPAIRANAANPHTDGRQNMNCASCHQIIGSVGAAPIAAPGAGGAYRFSQPPGSLAINIQGPRGGQGAVAGSGGSRASLLGAALTPLTQRLGLQANLPAGRGVFVNGVTPNTPAASAGLRPGDVILKVDGRPVHQPEEVAAIMAEMPNGRSVRIGVLRAGDVSNMSLVTGPSGLAAAVVQAPTAPVVMAGGAPTVPGVQPVIPKVPTEFNWLGMEIETFMAPQPVVGMPGATPVAGGGKGAQVAEVLAGSRAAVAGLQANDLIIEVNNRPVTSPARLDAAIKAATAAGQQILLKVHRNGQEFWIVL.

Residues 1 to 21 (MTMFNGDVEDGGRSNVSCGKD) lie on the Cytoplasmic side of the membrane. The chain crosses the membrane as a helical span at residues 22–42 (LKRYLMLMGVVALVVLFGAFI). The Lumenal segment spans residues 43 to 772 (YRQSSGGLRL…RNGQEFWIVL (730 aa)). Active-site charge relay system residues include His-187, Asp-220, and Ser-296. Positions 374–397 (IAAGTPSPHVDGRQNMDCSNCHDI) match the MCR (magnetochrome) 1 motif. Residues Cys-391, Cys-394, His-395, Cys-437, Cys-440, His-441, Cys-488, Cys-491, and His-492 each contribute to the heme site. 2 consecutive short sequence motifs (MCR) follow at residues 420-443 (IPANAVSPHTDGRQNMTCNTCHQF) and 470-494 (AIRANAANPHTDGRQNMNCASCHQI). Residues 445-558 (GGAAAGPIAF…ALTPLTQRLG (114 aa)) enclose the Cytochrome c domain. PDZ domains follow at residues 522–626 (AINI…LRAG) and 696–765 (GATP…HRNG).

The protein in the N-terminal section; belongs to the peptidase S1C family. Might interact with MamB via PDZ1. The cofactor is heme. In terms of processing, the protein isolated from magnetosome membranes has a molecular weight of about 36.3 kDa, probably due to C-terminal cleavage. Subject to autocatalytic cleavage; cleavage also requires MamO; these may be the same event.

It localises to the magnetosome membrane. Acts at 2 distinct steps of magnetosome formation; required for correct localization of proteins to the magnetosome while the protease activity is required for maturation of small magnetite crystals into larger, functional ones. Probably cleaves at least itself, MamO and MamP; cleavage requires the putative transprot domain of MamO. Involved in localization of some proteins (at least MamA, MamC, MamF, MamI and MamJ) to the magnetosome. One of 7 genes (mamLQBIEMO) able to induce magnetosome membrane biogenesis; coexpression of mamLQRBIEMO in a deletion of the 17 gene mamAB operon restores magnetosome vesicle formation but not magnetite biosynthesis. The polypeptide is Magnetosome formation protease MamE (Magnetospirillum gryphiswaldense (strain DSM 6361 / JCM 21280 / NBRC 15271 / MSR-1)).